The sequence spans 158 residues: Transcription elongation factor GreA (158 aa).

Positions 1 to 26 (MNKVPLTEKGAQQLREELQELKTVVR) form a coiled coil.

It belongs to the GreA/GreB family.

Necessary for efficient RNA polymerase transcription elongation past template-encoded arresting sites. The arresting sites in DNA have the property of trapping a certain fraction of elongating RNA polymerases that pass through, resulting in locked ternary complexes. Cleavage of the nascent transcript by cleavage factors such as GreA or GreB allows the resumption of elongation from the new 3'terminus. GreA releases sequences of 2 to 3 nucleotides. This is Transcription elongation factor GreA from Nitrosococcus oceani (strain ATCC 19707 / BCRC 17464 / JCM 30415 / NCIMB 11848 / C-107).